An 83-amino-acid chain; its full sequence is Large ribosomal subunit protein eL31 (83 aa).

The protein belongs to the eukaryotic ribosomal protein eL31 family.

The protein is Large ribosomal subunit protein eL31 of Methanococcus aeolicus (strain ATCC BAA-1280 / DSM 17508 / OCM 812 / Nankai-3).